The following is a 94-amino-acid chain: MIRSELIQKIADENPHLYQRDVERIVNTVFEEVTDAMARGDRVELRGFGAFSVKKRDARIGRNPRTGDTVHVEEKHVPFFKTGKLLRDRLNGKA.

The protein belongs to the bacterial histone-like protein family. As to quaternary structure, heterodimer of an alpha and a beta chain.

In terms of biological role, this protein is one of the two subunits of integration host factor, a specific DNA-binding protein that functions in genetic recombination as well as in transcriptional and translational control. The chain is Integration host factor subunit beta from Ruegeria pomeroyi (strain ATCC 700808 / DSM 15171 / DSS-3) (Silicibacter pomeroyi).